A 58-amino-acid chain; its full sequence is MQAKNNKPSDDFYDSADMQELAGETPIGWSATCLDQTICYYLDCDQEHFEDLDNSNHN.

It is found in the plastid. The protein resides in the chloroplast. This is an uncharacterized protein from Porphyra purpurea (Red seaweed).